The following is a 223-amino-acid chain: Cytidylate kinase (223 aa).

10–18 (GPASSGKST) serves as a coordination point for ATP.

This sequence belongs to the cytidylate kinase family. Type 1 subfamily.

Its subcellular location is the cytoplasm. It catalyses the reaction CMP + ATP = CDP + ADP. It carries out the reaction dCMP + ATP = dCDP + ADP. This is Cytidylate kinase from Streptococcus pneumoniae (strain 70585).